A 448-amino-acid polypeptide reads, in one-letter code: Carbon catabolite repressor protein 4 homolog 3 (448 aa).

The segment covering 50-67 (SSTSGPSDSNPESSSNRS) has biased composition (low complexity). A disordered region spans residues 50–92 (SSTSGPSDSNPESSSNRSYSRRWQNPLPRRQHPDQIPSSQIAR). A Mg(2+)-binding site is contributed by E162.

It belongs to the CCR4/nocturin family. Component of the CCR4-NOT complex, at least composed of CRR4 and CAF1 proteins. Mg(2+) is required as a cofactor.

The protein localises to the nucleus. Its subcellular location is the cytoplasm. The enzyme catalyses Exonucleolytic cleavage of poly(A) to 5'-AMP.. Its function is as follows. Acts as a catalytic component of the CCR4-NOT core complex, which in the nucleus seems to be a general transcription factor, and in the cytoplasm the major mRNA deadenylase involved in mRNA turnover. This Arabidopsis thaliana (Mouse-ear cress) protein is Carbon catabolite repressor protein 4 homolog 3 (CCR4-3).